The following is a 370-amino-acid chain: Peptidyl-prolyl cis-trans isomerase D (370 aa).

S5 carries the post-translational modification Phosphoserine. The region spanning 19–183 (FFDVDIGGER…KLCVIAECGE (165 aa)) is the PPIase cyclophilin-type domain. K171 carries the N6-acetyllysine modification. Positions 185-215 (KEGDDGGIFPKDGSGDSHPDFPEDADIDLKD) are chaperone activity. S198 bears the Phosphoserine mark. The interval 214 to 370 (KDVDKILLIT…EKAVYAKMFA (157 aa)) is interaction with HSP90AB1. 3 TPR repeats span residues 223-256 (TEDL…VDSS), 273-306 (LSCV…DPSN), and 307-340 (TKAL…APED).

This sequence belongs to the cyclophilin-type PPIase family. PPIase D subfamily. As to quaternary structure, identified in ESR1 or NR3C1/GCR steroid receptor-chaperone complexes. Found in HSP90 chaperone complexes with kinase clients LCK or EIF2AK1. Two monomers associate with one HSP90 homodimer. Interacts with HSP90AA1. Interacts with HSP90AB1; PPID and FKBP4 compete for binding to HSP90AB1 and the interaction is mutually exclusive with the PPID:HSPA8 interaction. Interacts with HSPA8; PPID and STIP1 but not FKBP4 compete for binding to HSPA8 and the interaction is mutually exclusive with the PPID:HSP90AB1 interaction. Interacts with S100A1 and S100A2; the interactions dissociate the PPID:HSP90AA1 interaction. Interacts with S100A6. Interacts with MYB, ILF2, XRCC6, RACK1 and RPS3. Interacts with cytoplasmic dynein 1 intermediate chain (DYNC1I1 or DYNC1I2). Widely expressed.

Its subcellular location is the cytoplasm. The protein localises to the nucleus. It localises to the nucleolus. The protein resides in the nucleoplasm. The enzyme catalyses [protein]-peptidylproline (omega=180) = [protein]-peptidylproline (omega=0). Its activity is regulated as follows. Less sensitive to inhibition by cyclosporin A than is CYP-18. Its function is as follows. PPIase that catalyzes the cis-trans isomerization of proline imidic peptide bonds in oligopeptides and may therefore assist protein folding. Proposed to act as a co-chaperone in HSP90 complexes such as in unligated steroid receptors heterocomplexes. Different co-chaperones seem to compete for association with HSP90 thus establishing distinct HSP90-co-chaperone-receptor complexes with the potential to exert tissue-specific receptor activity control. May have a preference for estrogen receptor complexes and is not found in glucocorticoid receptor complexes. May be involved in cytoplasmic dynein-dependent movement of the receptor from the cytoplasm to the nucleus. May regulate MYB by inhibiting its DNA-binding activity. Involved in regulation of AHR signaling by promoting the formation of the AHR:ARNT dimer; the function is independent of HSP90 but requires the chaperone activity. Involved in regulation of UV radiation-induced apoptosis. Promotes cell viability in anaplastic lymphoma kinase-positive anaplastic large-cell lymphoma (ALK+ ALCL) cell lines. In terms of biological role, (Microbial infection) May be involved in hepatitis C virus (HCV) replication and release. The polypeptide is Peptidyl-prolyl cis-trans isomerase D (Homo sapiens (Human)).